The chain runs to 479 residues: Long-chain acyl-protein thioester reductase (479 aa).

The protein belongs to the LuxC family.

It carries out the reaction a long-chain fatty aldehyde + NADP(+) + CoA = a long-chain fatty acyl-CoA + NADPH + H(+). The protein operates within lipid metabolism; fatty acid reduction for biolumincescence. LuxC is the fatty acid reductase enzyme responsible for synthesis of the aldehyde substrate for the luminescent reaction catalyzed by luciferase. The protein is Long-chain acyl-protein thioester reductase (luxC) of Aliivibrio fischeri (Vibrio fischeri).